Here is a 397-residue protein sequence, read N- to C-terminus: CCA-adding enzyme (397 aa).

The ATP site is built by Gly26 and Arg29. Gly26 and Arg29 together coordinate CTP. The Mg(2+) site is built by Asp39 and Asp41. ATP contacts are provided by Arg110, Asp153, Arg156, Arg159, and Arg162. Positions 110, 153, 156, 159, and 162 each coordinate CTP.

It belongs to the tRNA nucleotidyltransferase/poly(A) polymerase family. Bacterial CCA-adding enzyme type 3 subfamily. Homodimer. Requires Mg(2+) as cofactor.

It catalyses the reaction a tRNA precursor + 2 CTP + ATP = a tRNA with a 3' CCA end + 3 diphosphate. The catalysed reaction is a tRNA with a 3' CCA end + 2 CTP + ATP = a tRNA with a 3' CCACCA end + 3 diphosphate. Catalyzes the addition and repair of the essential 3'-terminal CCA sequence in tRNAs without using a nucleic acid template. Adds these three nucleotides in the order of C, C, and A to the tRNA nucleotide-73, using CTP and ATP as substrates and producing inorganic pyrophosphate. tRNA 3'-terminal CCA addition is required both for tRNA processing and repair. Also involved in tRNA surveillance by mediating tandem CCA addition to generate a CCACCA at the 3' terminus of unstable tRNAs. While stable tRNAs receive only 3'-terminal CCA, unstable tRNAs are marked with CCACCA and rapidly degraded. This chain is CCA-adding enzyme, found in Bacillus cereus (strain AH187).